The following is a 107-amino-acid chain: Large ribosomal subunit protein uL24 (107 aa).

This sequence belongs to the universal ribosomal protein uL24 family. As to quaternary structure, part of the 50S ribosomal subunit.

In terms of biological role, one of two assembly initiator proteins, it binds directly to the 5'-end of the 23S rRNA, where it nucleates assembly of the 50S subunit. Its function is as follows. One of the proteins that surrounds the polypeptide exit tunnel on the outside of the subunit. This Mesomycoplasma hyopneumoniae (strain J / ATCC 25934 / NCTC 10110) (Mycoplasma hyopneumoniae) protein is Large ribosomal subunit protein uL24.